Here is a 330-residue protein sequence, read N- to C-terminus: Aspartate--ammonia ligase (330 aa).

It belongs to the class-II aminoacyl-tRNA synthetase family. AsnA subfamily.

It is found in the cytoplasm. It catalyses the reaction L-aspartate + NH4(+) + ATP = L-asparagine + AMP + diphosphate + H(+). Its pathway is amino-acid biosynthesis; L-asparagine biosynthesis; L-asparagine from L-aspartate (ammonia route): step 1/1. The protein is Aspartate--ammonia ligase of Yersinia pseudotuberculosis serotype O:1b (strain IP 31758).